The chain runs to 224 residues: Probable molybdenum cofactor guanylyltransferase (224 aa).

Residues 20–22 (LAG), Lys-33, Asp-88, and Asp-117 each bind GTP. Asp-117 provides a ligand contact to Mg(2+).

This sequence belongs to the MobA family. Mg(2+) is required as a cofactor.

It localises to the cytoplasm. The enzyme catalyses Mo-molybdopterin + GTP + H(+) = Mo-molybdopterin guanine dinucleotide + diphosphate. Transfers a GMP moiety from GTP to Mo-molybdopterin (Mo-MPT) cofactor (Moco or molybdenum cofactor) to form Mo-molybdopterin guanine dinucleotide (Mo-MGD) cofactor. In Methanosarcina mazei (strain ATCC BAA-159 / DSM 3647 / Goe1 / Go1 / JCM 11833 / OCM 88) (Methanosarcina frisia), this protein is Probable molybdenum cofactor guanylyltransferase.